The sequence spans 301 residues: UstYa family oxidase phomYd (301 aa).

Positions 1–26 (MEKFFSPSRHNYADLSPTDVPASEES) are disordered. The helical transmembrane segment at 47 to 69 (VLVNRLLAASTVALVMVSLWLGW) threads the bilayer. 2 consecutive short sequence motifs (HXXHC) follow at residues 189–194 (THSVHC) and 218–222 (HTDHC). An N-linked (GlcNAc...) asparagine glycan is attached at Asn-275.

This sequence belongs to the ustYa family.

It localises to the membrane. It participates in mycotoxin biosynthesis. In terms of biological role, ustYa family oxidase; part of the gene cluster that mediates the biosynthesis of the phomopsins, a group of hexapeptide mycotoxins which infects lupins and causes lupinosis disease in livestock. Within the pathway, phomYd catalyzes the desaturation of the Asp moiety into 2,3-dehydroaspartic acid (dAsp). The pathway starts with the processing of the precursor phomA by several endopeptidases including kexin proteases as well as the cluster-specific S41 family peptidase phomP1 and the oligopeptidase phomG to produce 10 identical copies of the hexapeptide Tyr-Val-Ile-Pro-Ile-Asp. After being excised from the precursor peptide, the core peptides are cyclized and modified post-translationally by enzymes encoded within the gene cluster. The timing and order of proteolysis of the phomA precursor and PTMs are still unknown. Two tyrosinase-like enzymes, phomQ1 and phomQ2, catalyze the chlorination and hydroxylation of Tyr, respectively. PhomYb, is proposed to be involved in the construction of the macrocyclic structure. The other 4 ustYa family proteins may be involved in PTMs that generate the unique structure of phomopsin A. PhomYa is required for the hydroxylation of C-beta of Tyr. PhomYc, phomYd, and phomYe are responsible for the biosynthesis of 2,3-dehydroisoleucine (dIle), 2,3-dehydroaspartic acid (dAsp), and 3,4-dehydroproline (dPro), respectively. While dIle formation by phomYc is indispensable for the installation of dAsp by phomYd, the order of the other PTMs have not been elucidated yet. Most of the biosynthetic enzymes likely have broad substrate specificity, and thus, there might be a metabolic grid from a precursor to phomopsin A. The enzyme(s) responsible for the biosynthesis of 3,4-dehydrovaline (dVal) have also not been identified yet. Finally, phomM acts as an S-adenosylmethionine-dependent alpha-N-methyltransferase that catalyzes two successive N-methylation reactions, converting N-desmethyl-phomopsin A to phomopsin A and phomopsin A further to an N,N-dimethylated congener called phomopsin E. In Diaporthe leptostromiformis (Lupinosis disease fungus), this protein is UstYa family oxidase phomYd.